A 156-amino-acid chain; its full sequence is Small ribosomal subunit protein uS7cz/uS7cy (156 aa).

It belongs to the universal ribosomal protein uS7 family. Part of the 30S ribosomal subunit.

Its subcellular location is the plastid. The protein localises to the chloroplast. Functionally, one of the primary rRNA binding proteins, it binds directly to 16S rRNA where it nucleates assembly of the head domain of the 30S subunit. The protein is Small ribosomal subunit protein uS7cz/uS7cy (rps7-A) of Saccharum hybrid (Sugarcane).